The sequence spans 162 residues: Lymphocyte antigen 86 (162 aa).

The first 19 residues, 1–19 (MNGVAAALLVWILTSPSSS), serve as a signal peptide directing secretion. 3 cysteine pairs are disulfide-bonded: cysteine 33-cysteine 58, cysteine 45-cysteine 154, and cysteine 102-cysteine 112. Asparagine 96 carries an N-linked (GlcNAc...) asparagine glycan. Asparagine 156 carries N-linked (GlcNAc...) asparagine glycosylation.

In terms of assembly, M-shaped tetramer of two CD180-LY86 heterodimers. In terms of tissue distribution, highly expressed in spleen, liver, brain and thymus, and at lower levels in kidney.

The protein localises to the secreted. It localises to the extracellular space. May cooperate with CD180 and TLR4 to mediate the innate immune response to bacterial lipopolysaccharide (LPS) and cytokine production. Important for efficient CD180 cell surface expression. The protein is Lymphocyte antigen 86 (Ly86) of Mus musculus (Mouse).